A 511-amino-acid polypeptide reads, in one-letter code: Portal protein (511 aa).

Belongs to the Tevenvirinae portal protein family. As to quaternary structure, homododecamer. Interacts with the large terminase subunit. Interacts with the major capsid protein. Interacts with the capsid vertex protein.

Its subcellular location is the virion. Functionally, forms the portal vertex of the capsid. This portal plays critical roles in head assembly, genome packaging, neck/tail attachment, and genome ejection. The portal protein multimerizes as a single ring-shaped homododecamer arranged around a central channel. Binds to the terminase subunits to form the packaging machine. In Vibrio phage KVP40 (isolate Vibrio parahaemolyticus/Japan/Matsuzaki/1991) (KVP40), this protein is Portal protein.